The sequence spans 196 residues: Dephospho-CoA kinase (196 aa).

In terms of domain architecture, DPCK spans 6–196 (AIALTGGIGT…QVERFLKTLL (191 aa)). 14-19 (GTGKST) is an ATP binding site.

Belongs to the CoaE family.

The protein localises to the cytoplasm. The enzyme catalyses 3'-dephospho-CoA + ATP = ADP + CoA + H(+). It functions in the pathway cofactor biosynthesis; coenzyme A biosynthesis; CoA from (R)-pantothenate: step 5/5. In terms of biological role, catalyzes the phosphorylation of the 3'-hydroxyl group of dephosphocoenzyme A to form coenzyme A. The polypeptide is Dephospho-CoA kinase (Helicobacter pylori (strain J99 / ATCC 700824) (Campylobacter pylori J99)).